We begin with the raw amino-acid sequence, 77 residues long: Large ribosomal subunit protein uL29 (77 aa).

Belongs to the universal ribosomal protein uL29 family.

In Corynebacterium jeikeium (strain K411), this protein is Large ribosomal subunit protein uL29.